A 285-amino-acid chain; its full sequence is Steroidogenic acute regulatory protein, mitochondrial (285 aa).

The N-terminal 61 residues, Met-1 to Ile-61, are a transit peptide targeting the mitochondrion. An START domain is found at Thr-65–Gly-278.

In terms of assembly, may interact with TSPO. In terms of tissue distribution, highly expressed in the testis and at lower levels in the ovary, kidney and head.

The protein resides in the mitochondrion. It carries out the reaction cholesterol(in) = cholesterol(out). Its pathway is steroid metabolism; cholesterol metabolism. In terms of biological role, plays a key role in steroid hormone synthesis by enhancing the metabolism of cholesterol into pregnenolone. Mediates the transfer of cholesterol from the outer mitochondrial membrane to the inner mitochondrial membrane where it is cleaved to pregnenolone. The sequence is that of Steroidogenic acute regulatory protein, mitochondrial (star) from Danio rerio (Zebrafish).